Reading from the N-terminus, the 1571-residue chain is Pentafunctional AROM polypeptide 2 (1571 aa).

Residues 1–380 (MAEPTKISIL…YEPKASVVSN (380 aa)) form a 3-dehydroquinate synthase region. NAD(+) contacts are provided by residues 44 to 46 (DTN), 81 to 84 (ENSK), 112 to 114 (GGV), and D117. 7-phospho-2-dehydro-3-deoxy-D-arabino-heptonate is bound at residue R128. An NAD(+)-binding site is contributed by 137 to 138 (TT). 7-phospho-2-dehydro-3-deoxy-D-arabino-heptonate contacts are provided by D144 and K150. K159 contributes to the NAD(+) binding site. N160 contacts 7-phospho-2-dehydro-3-deoxy-D-arabino-heptonate. NAD(+)-binding positions include 177 to 180 (FIDT) and N188. E192 lines the Zn(2+) pocket. 7-phospho-2-dehydro-3-deoxy-D-arabino-heptonate is bound by residues 192–195 (EVIK) and K246. E256 functions as the Proton acceptor; for 3-dehydroquinate synthase activity in the catalytic mechanism. Residues 260–264 (RNLLN) and H267 each bind 7-phospho-2-dehydro-3-deoxy-D-arabino-heptonate. Residue H267 coordinates Zn(2+). Catalysis depends on H271, which acts as the Proton acceptor; for 3-dehydroquinate synthase activity. 7-phospho-2-dehydro-3-deoxy-D-arabino-heptonate-binding residues include H283 and K352. Zn(2+) is bound at residue H283. Positions 393 to 838 (VIPGVPKNLN…WDALKQKFGV (446 aa)) are EPSP synthase. Residue C820 is the For EPSP synthase activity of the active site. Residues 859–1051 (NASIIIIGMR…RKKHLSFFVS (193 aa)) are shikimate kinase. An ATP-binding site is contributed by 866–873 (GMRGAGKT). The tract at residues 1052 to 1273 (LTLPDLRESG…AAPGQLSAAE (222 aa)) is 3-dehydroquinase. H1175 acts as the Proton acceptor; for 3-dehydroquinate dehydratase activity in catalysis. The Schiff-base intermediate with substrate; for 3-dehydroquinate dehydratase activity role is filled by K1203. The tract at residues 1286 to 1571 (AKKFAVLGKP…NAVLGTNETK (286 aa)) is shikimate dehydrogenase.

It in the N-terminal section; belongs to the sugar phosphate cyclases superfamily. Dehydroquinate synthase family. The protein in the 2nd section; belongs to the EPSP synthase family. This sequence in the 3rd section; belongs to the shikimate kinase family. In the 4th section; belongs to the type-I 3-dehydroquinase family. It in the C-terminal section; belongs to the shikimate dehydrogenase family. As to quaternary structure, homodimer. The cofactor is Zn(2+).

The protein localises to the cytoplasm. It carries out the reaction 7-phospho-2-dehydro-3-deoxy-D-arabino-heptonate = 3-dehydroquinate + phosphate. The catalysed reaction is 3-dehydroquinate = 3-dehydroshikimate + H2O. It catalyses the reaction shikimate + NADP(+) = 3-dehydroshikimate + NADPH + H(+). The enzyme catalyses shikimate + ATP = 3-phosphoshikimate + ADP + H(+). It carries out the reaction 3-phosphoshikimate + phosphoenolpyruvate = 5-O-(1-carboxyvinyl)-3-phosphoshikimate + phosphate. It participates in metabolic intermediate biosynthesis; chorismate biosynthesis; chorismate from D-erythrose 4-phosphate and phosphoenolpyruvate: step 2/7. It functions in the pathway metabolic intermediate biosynthesis; chorismate biosynthesis; chorismate from D-erythrose 4-phosphate and phosphoenolpyruvate: step 3/7. Its pathway is metabolic intermediate biosynthesis; chorismate biosynthesis; chorismate from D-erythrose 4-phosphate and phosphoenolpyruvate: step 4/7. The protein operates within metabolic intermediate biosynthesis; chorismate biosynthesis; chorismate from D-erythrose 4-phosphate and phosphoenolpyruvate: step 5/7. It participates in metabolic intermediate biosynthesis; chorismate biosynthesis; chorismate from D-erythrose 4-phosphate and phosphoenolpyruvate: step 6/7. In terms of biological role, the AROM polypeptide catalyzes 5 consecutive enzymatic reactions in prechorismate polyaromatic amino acid biosynthesis. The protein is Pentafunctional AROM polypeptide 2 of Talaromyces marneffei (strain ATCC 18224 / CBS 334.59 / QM 7333) (Penicillium marneffei).